A 119-amino-acid polypeptide reads, in one-letter code: Large ribosomal subunit protein bL20 (119 aa).

This sequence belongs to the bacterial ribosomal protein bL20 family.

Its function is as follows. Binds directly to 23S ribosomal RNA and is necessary for the in vitro assembly process of the 50S ribosomal subunit. It is not involved in the protein synthesizing functions of that subunit. The chain is Large ribosomal subunit protein bL20 from Clostridium perfringens (strain ATCC 13124 / DSM 756 / JCM 1290 / NCIMB 6125 / NCTC 8237 / Type A).